We begin with the raw amino-acid sequence, 104 residues long: Signal recognition particle 19 kDa protein (104 aa).

It belongs to the SRP19 family. In terms of assembly, part of the signal recognition particle protein translocation system, which is composed of SRP and FtsY. Archaeal SRP consists of a 7S RNA molecule of 300 nucleotides and two protein subunits: SRP54 and SRP19.

It is found in the cytoplasm. Involved in targeting and insertion of nascent membrane proteins into the cytoplasmic membrane. Binds directly to 7S RNA and mediates binding of the 54 kDa subunit of the SRP. The polypeptide is Signal recognition particle 19 kDa protein (Archaeoglobus fulgidus (strain ATCC 49558 / DSM 4304 / JCM 9628 / NBRC 100126 / VC-16)).